We begin with the raw amino-acid sequence, 315 residues long: tRNA dimethylallyltransferase (315 aa).

10–17 (GPTGVGKT) is a binding site for ATP. Residue 12-17 (TGVGKT) coordinates substrate. Positions 35-38 (DSMQ) are interaction with substrate tRNA.

It belongs to the IPP transferase family. As to quaternary structure, monomer. Mg(2+) serves as cofactor.

The catalysed reaction is adenosine(37) in tRNA + dimethylallyl diphosphate = N(6)-dimethylallyladenosine(37) in tRNA + diphosphate. Its function is as follows. Catalyzes the transfer of a dimethylallyl group onto the adenine at position 37 in tRNAs that read codons beginning with uridine, leading to the formation of N6-(dimethylallyl)adenosine (i(6)A). This chain is tRNA dimethylallyltransferase, found in Thermodesulfovibrio yellowstonii (strain ATCC 51303 / DSM 11347 / YP87).